We begin with the raw amino-acid sequence, 119 residues long: Protein TusC (119 aa).

The protein belongs to the DsrF/TusC family. As to quaternary structure, heterohexamer, formed by a dimer of trimers. The hexameric TusBCD complex contains 2 copies each of TusB, TusC and TusD. The TusBCD complex interacts with TusE.

It localises to the cytoplasm. In terms of biological role, part of a sulfur-relay system required for 2-thiolation of 5-methylaminomethyl-2-thiouridine (mnm(5)s(2)U) at tRNA wobble positions. This is Protein TusC from Buchnera aphidicola subsp. Schizaphis graminum (strain Sg).